Consider the following 154-residue polypeptide: Small ribosomal subunit protein bS6 (154 aa).

Residues Asp-97–Gly-154 form a disordered region. Composition is skewed to basic and acidic residues over residues Gln-105–Glu-124 and Asp-135–Gly-154.

This sequence belongs to the bacterial ribosomal protein bS6 family.

Functionally, binds together with bS18 to 16S ribosomal RNA. This chain is Small ribosomal subunit protein bS6, found in Methylobacterium radiotolerans (strain ATCC 27329 / DSM 1819 / JCM 2831 / NBRC 15690 / NCIMB 10815 / 0-1).